We begin with the raw amino-acid sequence, 895 residues long: Stonin-2 (895 aa).

3 disordered regions span residues 10–101 (THQS…AISN), 144–204 (ASES…METI), and 236–279 (NEVG…PKST). Residues 64–73 (SHSEQDDSSE) show a composition bias toward basic and acidic residues. Composition is skewed to polar residues over residues 145 to 169 (SESS…TDLQ) and 179 to 193 (GRAS…SSSL). Residues S278, S284, and S299 each carry the phosphoserine modification. Disordered stretches follow at residues 291–326 (ISSL…SPIN) and 386–424 (QIDD…PRDG). Short sequence motifs (NPF) lie at residues 310-312 (NPF) and 326-328 (NPF). Polar residues predominate over residues 311–323 (PFLNESLQDIQPS). One can recognise an SHD domain in the interval 424 to 557 (GWPMMLRIPE…DLPVQSMDLS (134 aa)). The region spanning 565–872 (EEEITVDIRD…AHYSYKVEIE (308 aa)) is the MHD domain. S759 carries the phosphoserine modification.

This sequence belongs to the Stoned B family. As to quaternary structure, interacts with the second C2 domain of synaptotagmins SYT1 and SYT2. Interacts with EPS15, EPS15R and ITSN1. Interacts indirectly with the AP-2 adapter complex. Interacts with TOR1A and COPS4; the interaction controls STON2 protein stability. In terms of processing, phosphorylated in vitro by PKD. Neddylated and ubiquitinated; leading to its degradation and inhibited by TOR1A and COPS4.

The protein localises to the synapse. It is found in the synaptosome. Its subcellular location is the cytoplasm. The protein resides in the membrane. In terms of biological role, adapter protein involved in endocytic machinery. Involved in the synaptic vesicle recycling. May facilitate clathrin-coated vesicle uncoating. In Rattus norvegicus (Rat), this protein is Stonin-2 (Ston2).